The chain runs to 102 residues: UPF0058 protein MTH_224 (102 aa).

Belongs to the UPF0058 family.

The sequence is that of UPF0058 protein MTH_224 from Methanothermobacter thermautotrophicus (strain ATCC 29096 / DSM 1053 / JCM 10044 / NBRC 100330 / Delta H) (Methanobacterium thermoautotrophicum).